We begin with the raw amino-acid sequence, 73 residues long: UPF0352 protein APL_0584 (73 aa).

It belongs to the UPF0352 family.

This is UPF0352 protein APL_0584 from Actinobacillus pleuropneumoniae serotype 5b (strain L20).